The primary structure comprises 236 residues: Thiamine import ATP-binding protein ThiQ (236 aa).

An ABC transporter domain is found at 2–230 (LKLEKITYLY…SAAKASVLGI (229 aa)). 32–39 (GPSGAGKS) serves as a coordination point for ATP.

It belongs to the ABC transporter superfamily. Thiamine importer (TC 3.A.1.19.1) family. In terms of assembly, the complex is composed of two ATP-binding proteins (ThiQ), two transmembrane proteins (ThiP) and a solute-binding protein (ThiB).

The protein localises to the cell inner membrane. It catalyses the reaction thiamine(out) + ATP + H2O = thiamine(in) + ADP + phosphate + H(+). Part of the ABC transporter complex ThiBPQ involved in thiamine import. Responsible for energy coupling to the transport system. The chain is Thiamine import ATP-binding protein ThiQ from Yersinia pestis bv. Antiqua (strain Antiqua).